A 95-amino-acid polypeptide reads, in one-letter code: Citrate lyase acyl carrier protein (95 aa).

S14 bears the O-(phosphoribosyl dephospho-coenzyme A)serine mark.

The protein belongs to the CitD family. In terms of assembly, oligomer with a subunit composition of (alpha,beta,gamma)6.

The protein resides in the cytoplasm. Functionally, covalent carrier of the coenzyme of citrate lyase. The chain is Citrate lyase acyl carrier protein from Haemophilus influenzae (strain PittEE).